A 243-amino-acid polypeptide reads, in one-letter code: Small ribosomal subunit protein uS2c (243 aa).

This sequence belongs to the universal ribosomal protein uS2 family.

Its subcellular location is the plastid. The protein localises to the chloroplast. The protein is Small ribosomal subunit protein uS2c (rps2) of Cyanidium caldarium (Red alga).